A 30-amino-acid chain; its full sequence is NADH-ubiquinone oxidoreductase chain 5 (30 aa).

Residues 7–27 (NIIIIINSSLIIILFSSIFFF) form a helical membrane-spanning segment.

Belongs to the complex I subunit 5 family.

It localises to the mitochondrion inner membrane. It carries out the reaction a ubiquinone + NADH + 5 H(+)(in) = a ubiquinol + NAD(+) + 4 H(+)(out). In terms of biological role, core subunit of the mitochondrial membrane respiratory chain NADH dehydrogenase (Complex I) that is believed to belong to the minimal assembly required for catalysis. Complex I functions in the transfer of electrons from NADH to the respiratory chain. The immediate electron acceptor for the enzyme is believed to be ubiquinone. This chain is NADH-ubiquinone oxidoreductase chain 5 (ND5), found in Pisaster ochraceus (Ochre sea star).